Reading from the N-terminus, the 314-residue chain is MTLGSLGNSSSSVSATFLLSGIPGLERMHIWISIPLCFMYLVSIPGNCTILFIIKTERSLHEPMYLFLSMLALIDLGLSLCTLPTVLGIFWVGAREISHDACFAQLFFIHCFSFLESSVLLSMAFDRFVAICHPLHYVSILTNTVIGRIGLVSLGRSVALIFPLPFMLKRFPYCGSPVLSHSYCLHQEVMKLACADMKANSIYGMFVIVSTVGIDSLLILFSYALILRTVLSIASRAERFKALNTCVSHICAVLLFYTPMIGLSVIHRFGKQAPHLVQVVMGFMYLLFPPVMNPIVYSVKTKQIRDRVTHAFCY.

The Extracellular portion of the chain corresponds to 1-30; it reads MTLGSLGNSSSSVSATFLLSGIPGLERMHI. Asn8 carries an N-linked (GlcNAc...) asparagine glycan. Residues 31-51 traverse the membrane as a helical segment; the sequence is WISIPLCFMYLVSIPGNCTIL. Over 52–59 the chain is Cytoplasmic; it reads FIIKTERS. Residues 60 to 80 form a helical membrane-spanning segment; sequence LHEPMYLFLSMLALIDLGLSL. Over 81 to 104 the chain is Extracellular; the sequence is CTLPTVLGIFWVGAREISHDACFA. The cysteines at positions 102 and 194 are disulfide-linked. Residues 105–125 form a helical membrane-spanning segment; it reads QLFFIHCFSFLESSVLLSMAF. At 126–144 the chain is on the cytoplasmic side; it reads DRFVAICHPLHYVSILTNT. The chain crosses the membrane as a helical span at residues 145 to 165; the sequence is VIGRIGLVSLGRSVALIFPLP. Residues 166–201 are Extracellular-facing; sequence FMLKRFPYCGSPVLSHSYCLHQEVMKLACADMKANS. Residues 202 to 222 form a helical membrane-spanning segment; that stretch reads IYGMFVIVSTVGIDSLLILFS. Residues 223 to 242 are Cytoplasmic-facing; sequence YALILRTVLSIASRAERFKA. Residues 243–263 form a helical membrane-spanning segment; sequence LNTCVSHICAVLLFYTPMIGL. Residues 264–278 lie on the Extracellular side of the membrane; the sequence is SVIHRFGKQAPHLVQ. Residues 279 to 299 form a helical membrane-spanning segment; it reads VVMGFMYLLFPPVMNPIVYSV. The Cytoplasmic portion of the chain corresponds to 300-314; it reads KTKQIRDRVTHAFCY.

It belongs to the G-protein coupled receptor 1 family.

It is found in the cell membrane. Its function is as follows. Odorant receptor. The polypeptide is Olfactory receptor 51G2 (OR51G2) (Homo sapiens (Human)).